The sequence spans 360 residues: uncharacterized protein (360 aa).

Helical transmembrane passes span 26–48 (SVCY…SGAT), 58–80 (LHPL…ASVL), 89–111 (VMGL…NIAH), 126–148 (LSTG…SILA), 169–191 (RLAY…PTAL), 195–214 (IPSV…YALL), and 227–249 (CALC…SHMV).

The protein localises to the cell membrane. This is an uncharacterized protein from Treponema pallidum (strain Nichols).